A 123-amino-acid chain; its full sequence is Neuropeptide-like peptides nlp-40 (123 aa).

Positions 1–17 (MKLVILLSFVATVAVFA) are cleaved as a signal peptide. 3 propeptides span residues 30–31 (RA), 66–67 (KR), and 75–76 (KR).

Expressed in intestinal cells.

The protein resides in the secreted. Its subcellular location is the cytoplasmic vesicle. Functionally, neuropeptide ligand for the G-protein coupled receptor aex-2. Activates and regulates the rhythmic calcium influx in DVB GABergic neurons during the defecation motor program, which is a coordinated series of three muscle contractions that occurs every 45 seconds. This Caenorhabditis elegans protein is Neuropeptide-like peptides nlp-40.